A 162-amino-acid chain; its full sequence is Large ribosomal subunit protein uL15 (162 aa).

Residues 1–44 (MKLNELRDNPGATKNRIRVGRGIGSGKGKTAGRGVKGQKSREGV) form a disordered region. The span at 21–35 (RGIGSGKGKTAGRGV) shows a compositional bias: gly residues.

This sequence belongs to the universal ribosomal protein uL15 family. Part of the 50S ribosomal subunit.

Binds to the 23S rRNA. This Rhodospirillum rubrum (strain ATCC 11170 / ATH 1.1.1 / DSM 467 / LMG 4362 / NCIMB 8255 / S1) protein is Large ribosomal subunit protein uL15.